Consider the following 527-residue polypeptide: Transcriptional regulator ATRX (527 aa).

The interval 1 to 527 (GRSVVEFGDM…RSYKQKKKRR (527 aa)) is disordered. Positions 14-23 (RQQSAVSSAG) are enriched in polar residues. The span at 27-46 (PSGKEENVHSPEDKRVTKSK) shows a compositional bias: basic and acidic residues. Basic residues predominate over residues 47 to 59 (EKSKHLRTRTGRK). The span at 60–84 (VKSDVTDRFRKKEQSSESSEGEKKQ) shows a compositional bias: basic and acidic residues. 2 positions are modified to phosphoserine: S62 and S74. Residues 85–94 (GRQRTGTRGK) are compositionally biased toward basic residues. 4 stretches are compositionally biased toward basic and acidic residues: residues 95–122 (KSTD…KLPE), 136–145 (NKNDTTDEAK), 152–194 (DKSC…EKKQ), and 204–250 (KRPE…KEVK). K105 participates in a covalent cross-link: Glycyl lysine isopeptide (Lys-Gly) (interchain with G-Cter in SUMO2). Residues S112, S113, and S114 each carry the phosphoserine modification. S162 is subject to Phosphoserine. The residue at position 184 (R184) is a Citrulline. Over residues 267 to 297 (KQKKQRMSAKKKNSNTKERKRKSLRATTTKR) the composition is skewed to basic residues. The segment at 290-427 (LRATTTKRKQ…SNQVNSESDS (138 aa)) is interaction with DAXX. A phosphoserine mark is found at S345, S346, and S354. Residues 368–382 (PENRIAKKMLLEEIK) show a composition bias toward basic and acidic residues. A compositionally biased stretch (acidic residues) spans 387–398 (SDEDGSSDDEPK). Over residues 399-410 (EGEKKRIGKQSE) the composition is skewed to basic and acidic residues. Phosphoserine is present on residues S423, S425, and S427. Basic residues predominate over residues 435–446 (PRYRHRLLRHKL). Residues S449 and S453 each carry the phosphoserine modification. 2 stretches are compositionally biased toward basic and acidic residues: residues 454–469 (GGEK…ETKG) and 509–518 (KKAELEENQR).

Belongs to the SNF2/RAD54 helicase family. As to quaternary structure, interacts with DAXX to form the chromatin remodeling complex ATRX:DAXX. Probably binds EZH2. Binds annexin V in a calcium and phosphatidylcholine/phosphatidylserine-dependent manner. Interacts directly with CBX5 via the PxVxL motif. Interacts with RAD50, MRE11 and NBN; indicative for an association with the MRN complex. Interacts with histone MACROH2A1. Interacts with histone H3 peptides methylated at 'Lys-10' with preferences H3K9me3 &gt; H3K9me2 &gt; H3K9me1. Interacts with histone H3 peptides unmethylated at 'Lys-5' (H3K4me0). Interacts with MECP2, SMC1 and SMC3. Interacts with SETDB1, TRIM28 and ZNF274. Citrullinated by PADI4.

The protein resides in the nucleus. Its subcellular location is the chromosome. It localises to the telomere. It is found in the PML body. The enzyme catalyses ATP + H2O = ADP + phosphate + H(+). Functionally, involved in transcriptional regulation and chromatin remodeling. Facilitates DNA replication in multiple cellular environments and is required for efficient replication of a subset of genomic loci. Binds to DNA tandem repeat sequences in both telomeres and euchromatin and in vitro binds DNA quadruplex structures. May help stabilizing G-rich regions into regular chromatin structures by remodeling G4 DNA and incorporating H3.3-containing nucleosomes. Catalytic component of the chromatin remodeling complex ATRX:DAXX which has ATP-dependent DNA translocase activity and catalyzes the replication-independent deposition of histone H3.3 in pericentric DNA repeats outside S-phase and telomeres, and the in vitro remodeling of H3.3-containing nucleosomes. Its heterochromatin targeting is proposed to involve a combinatorial readout of histone H3 modifications (specifically methylation states of H3K9 and H3K4) and association with CBX5. Involved in maintaining telomere structural integrity in embryonic stem cells probably implying recruitment of CBX5 to telomeres. May be involved in transcriptional regulation of telomeric repeat-containing RNA (TERRA). Acts as a negative regulator of chromatin incorporation of transcriptionally repressive histone MACROH2A1, particularily at telomeres. Participates in the allele-specific gene expression at the imprinted IGF2/H19 gene locus. On the maternal allele, required for the chromatin occupancy of SMC1 and CTCTF within the H19 imprinting control region (ICR) and involved in esatblishment of histone tails modifications in the ICR. Binds to zinc-finger coding genes with atypical chromatin signatures and regulates its H3K9me3 levels. Forms a complex with ZNF274, TRIM28 and SETDB1 to facilitate the deposition and maintenance of H3K9me3 at the 3' exons of zinc-finger genes. This chain is Transcriptional regulator ATRX (Atrx), found in Rattus norvegicus (Rat).